The sequence spans 465 residues: MFIYDTKLKQKVPFEPLVQNKANIYVCGPTVYDDAHLGHARSAIAFDLLRRTLELSGYEVMLVRNFTDIDDKIINKALKENKSIQELSSIYIESYTRDLNALNVKKPSLEPKASEYLDAMVGMIETLLEKNIAYQVSNGDIYLDTSKDKDYGSLSVHNSSIEFGRIGLVQEKRLEQDFVLWKSYKGDNDVGFDSPLGKGRPGWHIECSSMVFETLALTNTPYQIDIHAGGADLLFPHHENEACQTRCAFGVELAKYWMHNGFVNINNEKMSKSLGNSFFVKDALKNYDGEILRNYLLGVHYRSVLNFNEEDLLVSKKRLDKIYRLKQRVLGTLGGINPNFKKEILECMQDDLNVSKALSVLESMLSSTNEKLDQNPKNKALKGEILANLKFIEELLGIGFKDPSAYFQLGVSESEKQEIENKIEERKRAKERKDFLKADSIREELLKQKIALMDTPQGTIWEKFF.

Residue C27 participates in Zn(2+) binding. The short motif at 29-39 (PTVYDDAHLGH) is the 'HIGH' region element. C207, H237, and E241 together coordinate Zn(2+). A 'KMSKS' region motif is present at residues 269–273 (KMSKS). ATP is bound at residue K272.

The protein belongs to the class-I aminoacyl-tRNA synthetase family. In terms of assembly, monomer. Zn(2+) is required as a cofactor.

The protein resides in the cytoplasm. The catalysed reaction is tRNA(Cys) + L-cysteine + ATP = L-cysteinyl-tRNA(Cys) + AMP + diphosphate. The sequence is that of Cysteine--tRNA ligase (cysS) from Helicobacter pylori (strain ATCC 700392 / 26695) (Campylobacter pylori).